The sequence spans 610 residues: UvrABC system protein C (610 aa).

The GIY-YIG domain occupies 16–94 (SQPGVYRMYD…IKLYQPRYNV (79 aa)). The UVR domain maps to 204-239 (DQVLTQLISRMETASQNLEFEEAARIRDQIQAVRRV).

This sequence belongs to the UvrC family. Interacts with UvrB in an incision complex.

Its subcellular location is the cytoplasm. Its function is as follows. The UvrABC repair system catalyzes the recognition and processing of DNA lesions. UvrC both incises the 5' and 3' sides of the lesion. The N-terminal half is responsible for the 3' incision and the C-terminal half is responsible for the 5' incision. The polypeptide is UvrABC system protein C (Escherichia coli (strain SMS-3-5 / SECEC)).